The following is a 150-amino-acid chain: Transcriptional regulator MraZ (150 aa).

SpoVT-AbrB domains are found at residues 7–58 (KEQH…EPEI) and 87–130 (LDSV…SPEK).

The protein belongs to the MraZ family. As to quaternary structure, forms oligomers.

The protein localises to the cytoplasm. It is found in the nucleoid. The sequence is that of Transcriptional regulator MraZ from Chlorobium phaeobacteroides (strain BS1).